The primary structure comprises 490 residues: 5-hydroxytryptamine receptor 3A (490 aa).

Positions methionine 1 to alanine 19 are cleaved as a signal peptide. At glutamine 20 to leucine 249 the chain is on the extracellular side. N-linked (GlcNAc...) asparagine glycosylation is found at asparagine 33, asparagine 109, asparagine 175, and asparagine 191. A disulfide bridge connects residues cysteine 162 and cysteine 176. A helical transmembrane segment spans residues phenylalanine 250 to phenylalanine 270. The Cytoplasmic segment spans residues tyrosine 271 to threonine 285. Residues leucine 286–isoleucine 306 form a helical membrane-spanning segment. At glycine 307–serine 312 the chain is on the extracellular side. A helical transmembrane segment spans residues valine 313–valine 333. Topologically, residues arginine 334–arginine 467 are cytoplasmic. Positions glycine 401–glutamate 422 are disordered. The segment at alanine 426–aspartate 462 is HA-stretch; determines single-channel conductance in 5-HT3 receptors. Residues valine 468–histidine 488 form a helical membrane-spanning segment. Over tyrosine 489–alanine 490 the chain is Extracellular.

The protein belongs to the ligand-gated ion channel (TC 1.A.9) family. 5-hydroxytryptamine receptor (TC 1.A.9.2) subfamily. HTR3A sub-subfamily. In terms of assembly, forms homopentameric as well as heteropentameric serotonin-activated cation-selective channel complexes with HTR3B or HTR3C or HTR3D or HTR3E. The homomeric complex is functional but exhibits low conductance with modified voltage dependence, and decreased agonist and antagonist affinity. Heteropentameric complexes display properties which resemble that of neuronal serotonin-activated channels in vivo. Interacts with RIC3. As to expression, expressed in cortex, intestine and liver. Not expressed in muscle or spleen.

It localises to the postsynaptic cell membrane. The protein resides in the cell membrane. The enzyme catalyses Na(+)(in) = Na(+)(out). It carries out the reaction K(+)(in) = K(+)(out). It catalyses the reaction Ca(2+)(in) = Ca(2+)(out). The catalysed reaction is Mg(2+)(in) = Mg(2+)(out). In terms of biological role, forms serotonin (5-hydroxytryptamine/5-HT3)-activated cation-selective channel complexes, which when activated cause fast, depolarizing responses in neurons. The protein is 5-hydroxytryptamine receptor 3A of Cavia porcellus (Guinea pig).